We begin with the raw amino-acid sequence, 118 residues long: MHSNAFFNLIACVLFPTPLIPSMVISIPRMINKWVKRVQFLTFLTNLFLYNIVQHYINRIRCYSFIKYLLLYNLYRPIFGRSLQMAITKIKIISDATAAVLLKSCAAMYDVLIDKKFK.

The next 2 helical transmembrane spans lie at 5 to 25 (AFFN…SMVI) and 40 to 57 (FLTF…QHYI).

The protein resides in the membrane. This is an uncharacterized protein from African swine fever virus (strain Badajoz 1971 Vero-adapted) (Ba71V).